Here is a 104-residue protein sequence, read N- to C-terminus: Co-chaperonin GroES 2 (104 aa).

Belongs to the GroES chaperonin family. Heptamer of 7 subunits arranged in a ring. Interacts with the chaperonin GroEL.

It localises to the cytoplasm. In terms of biological role, together with the chaperonin GroEL, plays an essential role in assisting protein folding. The GroEL-GroES system forms a nano-cage that allows encapsulation of the non-native substrate proteins and provides a physical environment optimized to promote and accelerate protein folding. GroES binds to the apical surface of the GroEL ring, thereby capping the opening of the GroEL channel. The chain is Co-chaperonin GroES 2 from Rhodopseudomonas palustris (strain ATCC BAA-98 / CGA009).